A 740-amino-acid polypeptide reads, in one-letter code: MNTVEENNTKITDNNNNNNNNNNNNNNNNNNNKNNDGENLSQQLIDSNNKKLRSPIQVYFDSDVSSCSLQSQSSPQQLPTQQPIQQQINNIFNHFLPQNQAPLLQAQNQQPINNINQVSNFQIQPIPLTFQLPNNINTNTNNTNMINNVQQFQNNFLNNNDFSLTDPVPSPFVLFNNNNNNNNNNNNNNNNNINNFHHNNINNNFDNNNSNYNTINTHPNNTNNNSSNINQIQSNIYPQQNLHNPFLPIHNNNNINNNNINKNNNNYNNNNNNKNNNNNNNNNNNNNNPQLFSMEPPNGFNHSTTDNTSSVSSVPSNKKKSSKTKQKSKPLTIQQQQQHKSNYHQQPNQNSQHLQSKPNSPILISSPLNSQQNSSPPQPSPTQSFLSPPQYSQSPQNNNFNNNNNNISNNNNNNNNNNNNNNNNNNNNNNNNNNNNNNNNNNNNNNNNNNNNNINNSTNNNNNNSNTNNNTNTNTNNNNNKNNNNNNNNEIENNNNEELILLWYNSIIKNIIVDENHFKIENQFNKENGYLVFKQLFKNHFGSIGTIGKEMAEYIQLHCEVMNEITELSKFHFQSIDNFYNNYIRIINGYSLIPAKDSGATIKARPKKGAKLSKESKDILENWIKNHIAHPYPTNDEKEQLQRQTGLTPNQISNWFINTRRRKVPTLCDEAGIITNSNVMPQMTINNNNNNGGNSNFKNNNNNTITTTSTSNNNNNNNNNNHNEMECDDGENEESSEYDD.

Polar residues predominate over residues 1 to 13 (MNTVEENNTKITD). Disordered stretches follow at residues 1–41 (MNTV…ENLS) and 179–491 (NNNN…NNEI). Low complexity-rich tracts occupy residues 14–34 (NNNN…NNKN), 179–241 (NNNN…PQQN), 251–288 (NNNN…NNNN), and 303–316 (STTD…SVPS). The stretch at 254-287 (NINNNNINKNNNNYNNNNNNKNNNNNNNNNNNNN) forms a coiled coil. Basic residues predominate over residues 317–328 (NKKKSSKTKQKS). The span at 339–363 (HKSNYHQQPNQNSQHLQSKPNSPIL) shows a compositional bias: polar residues. Composition is skewed to low complexity over residues 365 to 390 (SSPL…SPPQ) and 397 to 491 (NNNF…NNEI). The stretch at 472–500 (NTNTNNNNNKNNNNNNNNEIENNNNEELI) forms a coiled coil. The segment at residues 605–667 (RPKKGAKLSK…NTRRRKVPTL (63 aa)) is a DNA-binding region (homeobox). Positions 686–722 (NNNNNNGGNSNFKNNNNNTITTTSTSNNNNNNNNNNH) are enriched in low complexity. The tract at residues 686-740 (NNNNNNGGNSNFKNNNNNTITTTSTSNNNNNNNNNNHNEMECDDGENEESSEYDD) is disordered. Residues 726 to 740 (ECDDGENEESSEYDD) show a composition bias toward acidic residues.

The protein resides in the nucleus. Putative transcription factor. In Dictyostelium discoideum (Social amoeba), this protein is Homeobox protein 4 (hbx4).